Here is a 122-residue protein sequence, read N- to C-terminus: Histone H2B type 2-K1 (122 aa).

The disordered stretch occupies residues 1–30 (MSAEYGQRQQPGGRGGRSSGNKKSKKRCRR). The segment covering 20-30 (GNKKSKKRCRR) has biased composition (basic residues). Lysine 31 carries the post-translational modification N6-(2-hydroxyisobutyryl)lysine; alternate. Lysine 31 is subject to N6-(beta-hydroxybutyryl)lysine; alternate. An N6-crotonyllysine; alternate modification is found at lysine 31. N6-glutaryllysine; alternate is present on lysine 31. Lysine 31 is subject to N6-succinyllysine; alternate. Residue lysine 31 forms a Glycyl lysine isopeptide (Lys-Gly) (interchain with G-Cter in ubiquitin); alternate linkage. Serine 33 is subject to Phosphoserine. An N6-(2-hydroxyisobutyryl)lysine; alternate mark is found at lysine 40, lysine 43, and lysine 54. An N6-glutaryllysine; alternate mark is found at lysine 40 and lysine 43. At lysine 40 the chain carries N6-lactoyllysine; alternate. Lysine 43 is subject to N6-methyllysine. Lysine 43 carries the post-translational modification N6-methyllysine; alternate. Lysine 54 bears the N6,N6-dimethyllysine mark. Residue lysine 54 is modified to N6,N6-dimethyllysine; alternate. Arginine 76 bears the Dimethylated arginine mark. Serine 81 is subject to Phosphoserine. Omega-N-methylarginine occurs at positions 83 and 89. Lysine 105 is modified (N6-(2-hydroxyisobutyryl)lysine; alternate). N6-glutaryllysine; alternate is present on lysine 105. The residue at position 105 (lysine 105) is an N6-lactoyllysine; alternate. The residue at position 105 (lysine 105) is an N6-methyllysine. An N6-methyllysine; alternate modification is found at lysine 105. Serine 109 carries O-linked (GlcNAc) serine glycosylation. Threonine 112 is modified (phosphothreonine). An N6-(2-hydroxyisobutyryl)lysine; alternate mark is found at lysine 113 and lysine 117. 2 positions are modified to N6-(beta-hydroxybutyryl)lysine; alternate: lysine 113 and lysine 117. N6-glutaryllysine; alternate is present on residues lysine 113 and lysine 117. N6-succinyllysine; alternate is present on residues lysine 113 and lysine 117. N6-lactoyllysine; alternate is present on lysine 113. The residue at position 113 (lysine 113) is an N6-malonyllysine; alternate. Lysine 113 is modified (N6-methylated lysine; alternate). Lysine 117 participates in a covalent cross-link: Glycyl lysine isopeptide (Lys-Gly) (interchain with G-Cter in ubiquitin); alternate.

Belongs to the histone H2B family. In terms of assembly, the nucleosome is a histone octamer containing two molecules each of H2A, H2B, H3 and H4 assembled in one H3-H4 heterotetramer and two H2A-H2B heterodimers. The octamer wraps approximately 147 bp of DNA.

Its subcellular location is the chromosome. The protein localises to the nucleus. Functionally, core component of nucleosome. Nucleosomes wrap and compact DNA into chromatin, limiting DNA accessibility to the cellular machineries which require DNA as a template. Histones thereby play a central role in transcription regulation, DNA repair, DNA replication and chromosomal stability. DNA accessibility is regulated via a complex set of post-translational modifications of histones, also called histone code, and nucleosome remodeling. The polypeptide is Histone H2B type 2-K1 (Homo sapiens (Human)).